We begin with the raw amino-acid sequence, 218 residues long: Cytochrome b6 (218 aa).

A helical membrane pass occupies residues 35-55 (IFYCLGGITLVCFLIQFATGF). Heme c is bound at residue C38. Heme b contacts are provided by H89 and H103. 3 helical membrane-spanning segments follow: residues 93–113 (ASMM…TGGF), 119–139 (LTWV…VTGY), and 189–209 (LHTF…FLMI). 2 residues coordinate heme b: H190 and H205.

It belongs to the cytochrome b family. PetB subfamily. The 4 large subunits of the cytochrome b6-f complex are cytochrome b6, subunit IV (17 kDa polypeptide, PetD), cytochrome f and the Rieske protein, while the 4 small subunits are PetG, PetL, PetM and PetN. The complex functions as a dimer. Heme b serves as cofactor. Heme c is required as a cofactor.

Its subcellular location is the cellular thylakoid membrane. In terms of biological role, component of the cytochrome b6-f complex, which mediates electron transfer between photosystem II (PSII) and photosystem I (PSI), cyclic electron flow around PSI, and state transitions. This Prochlorococcus marinus (strain MIT 9515) protein is Cytochrome b6.